A 587-amino-acid polypeptide reads, in one-letter code: Membrane protein insertase YidC (587 aa).

A run of 5 helical transmembrane segments spans residues 5–25 (SVIG…FMKP), 365–385 (GLII…LSLA), 430–450 (LGGC…FYVF), 480–500 (LPLY…TVFF), and 516–536 (IMIW…PSGL).

Belongs to the OXA1/ALB3/YidC family. Type 1 subfamily. Interacts with the Sec translocase complex via SecD. Specifically interacts with transmembrane segments of nascent integral membrane proteins during membrane integration.

The protein localises to the cell inner membrane. Required for the insertion and/or proper folding and/or complex formation of integral membrane proteins into the membrane. Involved in integration of membrane proteins that insert both dependently and independently of the Sec translocase complex, as well as at least some lipoproteins. Aids folding of multispanning membrane proteins. This Chlorobaculum parvum (strain DSM 263 / NCIMB 8327) (Chlorobium vibrioforme subsp. thiosulfatophilum) protein is Membrane protein insertase YidC.